Reading from the N-terminus, the 675-residue chain is Alpha-1,4-glucan:maltose-1-phosphate maltosyltransferase 1 (675 aa).

Lys-264, Gln-324, and Asp-359 together coordinate alpha-maltose 1-phosphate. Asp-394 (nucleophile) is an active-site residue. Asn-395 is an alpha-maltose 1-phosphate binding site. The active-site Proton donor is the Glu-423. Position 534–535 (534–535) interacts with alpha-maltose 1-phosphate; sequence KY.

Belongs to the glycosyl hydrolase 13 family. GlgE subfamily. In terms of assembly, homodimer.

The enzyme catalyses alpha-maltose 1-phosphate + [(1-&gt;4)-alpha-D-glucosyl](n) = [(1-&gt;4)-alpha-D-glucosyl](n+2) + phosphate. With respect to regulation, is competitively inhibited by alpha-, beta- and gamma-cyclodextrins (cyclic maltooligosaccharides), unlike GlgE from M.tuberculosis. Functionally, maltosyltransferase that uses maltose 1-phosphate (M1P) as the sugar donor to elongate linear or branched alpha-(1-&gt;4)-glucans. Maltooligosaccharides with a degree of polymerization (DP) superior or equal to 4 are efficient acceptors, with DP6 being optimal in the GlgE-catalyzed polymerization with M1P. Is specific for the alpha-anomer of M1P as substrate, since the beta-anomer of M1P gives no activity. Alpha-D-glucose 1-phosphate cannot serve as a donor substrate, but alpha-maltosyl fluoride is an efficient donor in vitro. Exhibits an alpha-retaining catalytic mechanism, with evidence that maltooligosaccharide acceptors are extended at their non-reducing ends. Is also able to catalyze the reverse reaction in vitro, releasing M1P from glycogen or maltoheptaose in the presence of inorganic phosphate. Also catalyzes disproportionation reactions through maltosyl transfer between maltooligosaccharides. Is probably involved in a branched alpha-glucan biosynthetic pathway from trehalose, together with TreS, Mak and GlgB. This is Alpha-1,4-glucan:maltose-1-phosphate maltosyltransferase 1 (glgE1) from Streptomyces coelicolor (strain ATCC BAA-471 / A3(2) / M145).